The sequence spans 428 residues: Elongation factor 1-alpha (428 aa).

In terms of domain architecture, tr-type G spans 5–215 (KPHINIVFIG…ALDQMPEPPK (211 aa)). Residues 14 to 21 (GHVDHGKS) form a G1 region. 14-21 (GHVDHGKS) is a binding site for GTP. S21 is a Mg(2+) binding site. The tract at residues 68-72 (GITID) is G2. Residues 89–92 (DAPG) are G3. GTP-binding positions include 89–93 (DAPGH) and 144–147 (NKMD). Residues 144–147 (NKMD) form a G4 region. The interval 181–183 (SAW) is G5.

This sequence belongs to the TRAFAC class translation factor GTPase superfamily. Classic translation factor GTPase family. EF-Tu/EF-1A subfamily.

It is found in the cytoplasm. It catalyses the reaction GTP + H2O = GDP + phosphate + H(+). GTP hydrolase that promotes the GTP-dependent binding of aminoacyl-tRNA to the A-site of ribosomes during protein biosynthesis. In Thermococcus celer, this protein is Elongation factor 1-alpha.